Consider the following 113-residue polypeptide: Small ribosomal subunit protein bS6 (113 aa).

The protein belongs to the bacterial ribosomal protein bS6 family.

In terms of biological role, binds together with bS18 to 16S ribosomal RNA. The polypeptide is Small ribosomal subunit protein bS6 (Vesicomyosocius okutanii subsp. Calyptogena okutanii (strain HA)).